The primary structure comprises 267 residues: Hydrolase FUB4 (267 aa).

Residues serine 93, aspartate 183, and histidine 243 each act as charge relay system in the active site.

The protein belongs to the AB hydrolase 3 family.

It participates in mycotoxin biosynthesis. Its function is as follows. Hydrolase; part of the gene cluster that mediates the biosynthesis of fusaric acid, a mycotoxin with low to moderate toxicity to animals and humans, but with high phytotoxic properties. L-aspartate is suggested as fusaric acid amino acid precursor that is activated and further processed to O-acetyl-L-homoserine by cluster enzymes aspartate kinase FUB3 and homoserine O-acetyltransferase FUB5, as well as enzymes of the primary metabolism. The polyketide synthase (PKS) FUB1 generates the triketide trans-2-hexenal which is presumptively released by the hydrolase FUB4 and linked to the NRPS-bound amino acid precursor by NAD(P)-dependent dehydrogenase FUB6. FUB1, FUB4, and the non-canonical NRPS Fub8 may form an enzyme complex. Further processing of the NRPS-bound intermediate might be carried out by FUB6 and the sulfhydrylase FUB7, enabling a spontaneous electrocyclization to close the carbon backbone of fusaric acid. Dihydrofusaric acid is likely to be released via reduction by the thioester reductase (TR) domain of FUB8 whereupon the final oxidation to fusaric acid may (also) be performed by the FMN-dependent dehydrogenase FUB9. The sequence is that of Hydrolase FUB4 from Fusarium oxysporum f. sp. lycopersici (strain 4287 / CBS 123668 / FGSC 9935 / NRRL 34936) (Fusarium vascular wilt of tomato).